Reading from the N-terminus, the 207-residue chain is MADLSPVLQPHREGGSRYGYTMFPGLECESEAELSLSLARTKTRSYGSTASVAAPLSERYIEHRLSPSDTLQGIALKYGVTMEQIKRANKLFSTDCIFLRKSLNIPVISKKGSLFNGLGSLDSPENETQDNCNSPTKEPALAEAHTVSIPSSAKTNQPIVRSDEELSAKDFLQRLDLQIKRSTQAAQRLKEEDLRHDDSYATCSYQH.

A LysM domain is found at 61-105 (IEHRLSPSDTLQGIALKYGVTMEQIKRANKLFSTDCIFLRKSLNI). The tract at residues 186–207 (AQRLKEEDLRHDDSYATCSYQH) is disordered. Residues 188–199 (RLKEEDLRHDDS) show a composition bias toward basic and acidic residues.

This Xenopus tropicalis (Western clawed frog) protein is LysM and putative peptidoglycan-binding domain-containing protein 2 (lysmd2).